The following is a 45-amino-acid chain: Photosystem II reaction center protein K (45 aa).

Residues 1-8 constitute a propeptide that is removed on maturation; that stretch reads MDFALLLA. Residues 24–44 traverse the membrane as a helical segment; it reads LPLIPLFFLLLAFVWQAAVGF.

Belongs to the PsbK family. In terms of assembly, PSII is composed of 1 copy each of membrane proteins PsbA, PsbB, PsbC, PsbD, PsbE, PsbF, PsbH, PsbI, PsbJ, PsbK, PsbL, PsbM, PsbT, PsbX, PsbY, PsbZ, Psb30/Ycf12, peripheral proteins PsbO, CyanoQ (PsbQ), PsbU, PsbV and a large number of cofactors. It forms dimeric complexes.

It is found in the cellular thylakoid membrane. Its function is as follows. One of the components of the core complex of photosystem II (PSII). PSII is a light-driven water:plastoquinone oxidoreductase that uses light energy to abstract electrons from H(2)O, generating O(2) and a proton gradient subsequently used for ATP formation. It consists of a core antenna complex that captures photons, and an electron transfer chain that converts photonic excitation into a charge separation. The protein is Photosystem II reaction center protein K of Gloeothece citriformis (strain PCC 7424) (Cyanothece sp. (strain PCC 7424)).